A 99-amino-acid polypeptide reads, in one-letter code: DNA-directed RNA polymerase subunit omega (99 aa).

Belongs to the RNA polymerase subunit omega family. The RNAP catalytic core consists of 2 alpha, 1 beta, 1 beta' and 1 omega subunit. When a sigma factor is associated with the core the holoenzyme is formed, which can initiate transcription.

The enzyme catalyses RNA(n) + a ribonucleoside 5'-triphosphate = RNA(n+1) + diphosphate. In terms of biological role, promotes RNA polymerase assembly. Latches the N- and C-terminal regions of the beta' subunit thereby facilitating its interaction with the beta and alpha subunits. In Xylella fastidiosa (strain Temecula1 / ATCC 700964), this protein is DNA-directed RNA polymerase subunit omega.